A 1181-amino-acid chain; its full sequence is WD repeat-containing protein 35 (1181 aa).

6 WD repeats span residues 4-43 (YLSK…VLKL), 61-100 (LSMN…VWML), 105-143 (WIEE…IVGS), 147-185 (NRIW…IYDN), 193-241 (MKLS…IMRH), and 246-288 (NPVL…IVQF).

As to quaternary structure, component of the IFT complex A (IFT-A) complex. IFT-A complex is divided into a core subcomplex composed of IFT122:IFT140:WDR19 which is associated with TULP3 and a peripheral subcomplex composed of IFT43:WDR35:TTC21B. Interacts directy with IFT122, ITF43 and TTC21B. Interacts with IFT43. Interacts with CFAP61.

The protein resides in the cytoplasm. It is found in the cytoskeleton. Its subcellular location is the microtubule organizing center. It localises to the centrosome. The protein localises to the cilium axoneme. The protein resides in the cilium basal body. In terms of biological role, as a component of the IFT complex A (IFT-A), a complex required for retrograde ciliary transport and entry into cilia of G protein-coupled receptors (GPCRs), it is involved in ciliogenesis and ciliary protein trafficking. May promote CASP3 activation and TNF-stimulated apoptosis. In Homo sapiens (Human), this protein is WD repeat-containing protein 35.